The chain runs to 423 residues: Mannose-6-phosphate isomerase (423 aa).

Ala2 is subject to N-acetylalanine. Residues Ser102 and Ser108 each carry the phosphoserine modification. Zn(2+) is bound by residues Gln110, His112, Glu137, and His276. Arg295 is a catalytic residue.

It belongs to the mannose-6-phosphate isomerase type 1 family. Zn(2+) serves as cofactor.

The protein resides in the cytoplasm. The enzyme catalyses D-mannose 6-phosphate = D-fructose 6-phosphate. It participates in nucleotide-sugar biosynthesis; GDP-alpha-D-mannose biosynthesis; alpha-D-mannose 1-phosphate from D-fructose 6-phosphate: step 1/2. Functionally, isomerase that catalyzes the interconversion of fructose-6-P and mannose-6-P and has a critical role in the supply of D-mannose derivatives required for many eukaryotic glycosylation reactions. This Macaca fascicularis (Crab-eating macaque) protein is Mannose-6-phosphate isomerase (MPI).